The primary structure comprises 503 residues: Cobyric acid synthase (503 aa).

Residues 255 to 444 (AIDVAVIRCP…MHDLFHNDAF (190 aa)) enclose the GATase cobBQ-type domain. Cysteine 337 serves as the catalytic Nucleophile. Histidine 436 is an active-site residue.

Belongs to the CobB/CobQ family. CobQ subfamily.

The protein operates within cofactor biosynthesis; adenosylcobalamin biosynthesis. Functionally, catalyzes amidations at positions B, D, E, and G on adenosylcobyrinic A,C-diamide. NH(2) groups are provided by glutamine, and one molecule of ATP is hydrogenolyzed for each amidation. The chain is Cobyric acid synthase from Geobacillus kaustophilus (strain HTA426).